Consider the following 738-residue polypeptide: NAD(P)H-quinone oxidoreductase subunit 5, chloroplastic (738 aa).

17 helical membrane passes run tryptophan 9 to isoleucine 29, isoleucine 39 to serine 59, valine 89 to isoleucine 109, phenylalanine 125 to isoleucine 145, isoleucine 147 to threonine 167, glycine 185 to phenylalanine 205, asparagine 219 to alanine 239, threonine 258 to alanine 278, leucine 280 to isoleucine 300, leucine 327 to isoleucine 347, alanine 354 to serine 374, threonine 396 to serine 416, tryptophan 425 to tyrosine 445, leucine 542 to phenylalanine 562, serine 610 to phenylalanine 630, glycine 691 to isoleucine 711, and glycine 717 to isoleucine 737.

This sequence belongs to the complex I subunit 5 family. NDH is composed of at least 16 different subunits, 5 of which are encoded in the nucleus.

The protein resides in the plastid. Its subcellular location is the chloroplast thylakoid membrane. The enzyme catalyses a plastoquinone + NADH + (n+1) H(+)(in) = a plastoquinol + NAD(+) + n H(+)(out). It catalyses the reaction a plastoquinone + NADPH + (n+1) H(+)(in) = a plastoquinol + NADP(+) + n H(+)(out). In terms of biological role, NDH shuttles electrons from NAD(P)H:plastoquinone, via FMN and iron-sulfur (Fe-S) centers, to quinones in the photosynthetic chain and possibly in a chloroplast respiratory chain. The immediate electron acceptor for the enzyme in this species is believed to be plastoquinone. Couples the redox reaction to proton translocation, and thus conserves the redox energy in a proton gradient. This chain is NAD(P)H-quinone oxidoreductase subunit 5, chloroplastic (ndhF), found in Sorghum bicolor (Sorghum).